The chain runs to 681 residues: DNA-directed RNA polymerase subunit beta' (681 aa).

4 residues coordinate Zn(2+): cysteine 69, cysteine 71, cysteine 87, and cysteine 90. 3 residues coordinate Mg(2+): aspartate 489, aspartate 491, and aspartate 493.

The protein belongs to the RNA polymerase beta' chain family. RpoC1 subfamily. In terms of assembly, in plastids the minimal PEP RNA polymerase catalytic core is composed of four subunits: alpha, beta, beta', and beta''. When a (nuclear-encoded) sigma factor is associated with the core the holoenzyme is formed, which can initiate transcription. Mg(2+) is required as a cofactor. The cofactor is Zn(2+).

It is found in the plastid. Its subcellular location is the chloroplast. It carries out the reaction RNA(n) + a ribonucleoside 5'-triphosphate = RNA(n+1) + diphosphate. Its function is as follows. DNA-dependent RNA polymerase catalyzes the transcription of DNA into RNA using the four ribonucleoside triphosphates as substrates. This chain is DNA-directed RNA polymerase subunit beta', found in Atropa belladonna (Belladonna).